The following is a 362-amino-acid chain: uncharacterized protein (362 aa).

The span at 314–323 (GEEKEPKQES) shows a compositional bias: basic and acidic residues. The disordered stretch occupies residues 314–362 (GEEKEPKQESQEQLFNPFTIDEMLTEEQQQQQEEENNATEEEGDTVKLG). The segment covering 345–356 (QEEENNATEEEG) has biased composition (acidic residues).

This is an uncharacterized protein from Acidianus two-tailed virus (ATV).